Here is a 216-residue protein sequence, read N- to C-terminus: LexA repressor (216 aa).

The segment at residues arginine 29–lysine 49 is a DNA-binding region (H-T-H motif). Residues serine 134 and lysine 171 each act as for autocatalytic cleavage activity in the active site.

The protein belongs to the peptidase S24 family. Homodimer.

It catalyses the reaction Hydrolysis of Ala-|-Gly bond in repressor LexA.. Represses a number of genes involved in the response to DNA damage (SOS response), including recA and lexA. In the presence of single-stranded DNA, RecA interacts with LexA causing an autocatalytic cleavage which disrupts the DNA-binding part of LexA, leading to derepression of the SOS regulon and eventually DNA repair. The protein is LexA repressor of Bordetella bronchiseptica (strain ATCC BAA-588 / NCTC 13252 / RB50) (Alcaligenes bronchisepticus).